The chain runs to 179 residues: Large ribosomal subunit protein uL6 (179 aa).

Belongs to the universal ribosomal protein uL6 family. As to quaternary structure, part of the 50S ribosomal subunit.

In terms of biological role, this protein binds to the 23S rRNA, and is important in its secondary structure. It is located near the subunit interface in the base of the L7/L12 stalk, and near the tRNA binding site of the peptidyltransferase center. This Spiroplasma citri protein is Large ribosomal subunit protein uL6.